We begin with the raw amino-acid sequence, 215 residues long: uncharacterized protein (215 aa).

The disordered stretch occupies residues 25 to 48 (LKSASPGPAPASQQASSFGSAPAQ). A compositionally biased stretch (low complexity) spans 27 to 47 (SASPGPAPASQQASSFGSAPA).

This is an uncharacterized protein from Homo sapiens (Human).